A 620-amino-acid polypeptide reads, in one-letter code: MALLLPEFDPADVRAGRDLIHRLTADAAGIQRGVLREILSRNSGTEYLRRFLGGAAGDDDDVRDAFKRRVPVSGYEDVKPYVDRVASGGEPSSALLCSDPITCLSRSSGTSGGQQKLLPSTAEELDRKVFFYAVQALVRNMSLHTDHGEDDDGGGGEGMYLMFAFHGDRTLSGLPIQSALTTYYHSRQFQECDIGGFDKCTSPLEAILCPYGEQSMYCQLLCGLLHRCRVDRVGASFAAGLVRGIKFLENHWEEMCFNIRSGQLSDWITHTPLRDAVTGQYLQGSNPALADEIASECARKPWDGIVRRLWPRARYIRTIVTGSMSQYIPILEVYGGGLPLVSPIYASTECAAGINLRPLDPPSHVSYALLPNIAYFEFLEVMDENGEKVQGTTRLDDNLGEVKVVDLVDVKVGRCYELIVTTFAGLYRYRVGDLFTVSGFYNATPLFHFSGRHDVILSIDYEKISEEDLLNAIAETDKFHLRPLGYMLVGSTAYADISTLPGHYILFWELTNTCDSNVAIDIDQTAMEKCCLAVEDHFDEMYRKIRHRGSISALEIRILSHGAFDALMDFFVSRGTSASQYKTPTAIRSKEAMMVLEERVVGRFFSQATPSCRSAEFERR.

The protein belongs to the IAA-amido conjugating enzyme family. As to expression, ubiquitous.

May catalyze the synthesis of indole-3-acetic acid (IAA)-amino acid conjugates, providing a mechanism for the plant to cope with the presence of excess auxin. The sequence is that of Probable indole-3-acetic acid-amido synthetase GH3.7 (GH3.7) from Oryza sativa subsp. japonica (Rice).